Consider the following 88-residue polypeptide: Small ribosomal subunit protein uS17 (88 aa).

This sequence belongs to the universal ribosomal protein uS17 family. In terms of assembly, part of the 30S ribosomal subunit.

Its function is as follows. One of the primary rRNA binding proteins, it binds specifically to the 5'-end of 16S ribosomal RNA. In Pseudomonas fluorescens (strain SBW25), this protein is Small ribosomal subunit protein uS17.